The primary structure comprises 254 residues: Isoprenyl transferase (254 aa).

The active site involves aspartate 23. Aspartate 23 contacts Mg(2+). Substrate-binding positions include 24–27 (GNGR), tryptophan 28, arginine 36, histidine 40, and 68–70 (STE). The active-site Proton acceptor is asparagine 71. Residues tryptophan 72, arginine 74, arginine 191, and 197-199 (RIS) contribute to the substrate site. Residue glutamate 210 coordinates Mg(2+).

Belongs to the UPP synthase family. As to quaternary structure, homodimer. Requires Mg(2+) as cofactor.

Catalyzes the condensation of isopentenyl diphosphate (IPP) with allylic pyrophosphates generating different type of terpenoids. In Porphyromonas gingivalis (strain ATCC BAA-308 / W83), this protein is Isoprenyl transferase.